A 189-amino-acid chain; its full sequence is Glucose-6-phosphate isomerase (189 aa).

Fe cation is bound by residues histidine 88, histidine 90, glutamate 97, and histidine 136.

The protein belongs to the archaeal-type GPI family. In terms of assembly, homodimer.

It is found in the cytoplasm. It carries out the reaction alpha-D-glucose 6-phosphate = beta-D-fructose 6-phosphate. It functions in the pathway carbohydrate degradation; glycolysis; D-glyceraldehyde 3-phosphate and glycerone phosphate from D-glucose: step 2/4. The sequence is that of Glucose-6-phosphate isomerase from Thermococcus kodakarensis (strain ATCC BAA-918 / JCM 12380 / KOD1) (Pyrococcus kodakaraensis (strain KOD1)).